The primary structure comprises 429 residues: Serine--tRNA ligase (429 aa).

Position 235–237 (235–237 (TAE)) interacts with L-serine. 266-268 (RSE) contributes to the ATP binding site. Residue Glu289 participates in L-serine binding. ATP is bound at residue 353–356 (EISS). Ser389 serves as a coordination point for L-serine.

The protein belongs to the class-II aminoacyl-tRNA synthetase family. Type-1 seryl-tRNA synthetase subfamily. Homodimer. The tRNA molecule binds across the dimer.

The protein localises to the cytoplasm. The enzyme catalyses tRNA(Ser) + L-serine + ATP = L-seryl-tRNA(Ser) + AMP + diphosphate + H(+). The catalysed reaction is tRNA(Sec) + L-serine + ATP = L-seryl-tRNA(Sec) + AMP + diphosphate + H(+). It functions in the pathway aminoacyl-tRNA biosynthesis; selenocysteinyl-tRNA(Sec) biosynthesis; L-seryl-tRNA(Sec) from L-serine and tRNA(Sec): step 1/1. Catalyzes the attachment of serine to tRNA(Ser). Is also able to aminoacylate tRNA(Sec) with serine, to form the misacylated tRNA L-seryl-tRNA(Sec), which will be further converted into selenocysteinyl-tRNA(Sec). The polypeptide is Serine--tRNA ligase (Haemophilus influenzae (strain PittEE)).